The sequence spans 517 residues: MEKIQRYLQLERSQQHDFLYPLIFQEYIYAFADDRTFSRXXSILSGNPDSENLGSRKKYSLLIVKRLITRMYQQNHFLISSNDSNQNKNPFWGRNKDFYSQILAEGFAFIVEIPFSLQLLSSLGGKKKRVVNSQNLRSIHSIFPFLEDNFSHLHFVLDILIPHPVHVEILIQTLRYRVKDVSSLHLLRFLLNEYCNCNSIITTKKAGSSFSKRNQRLFLFLYNSHVCEYESVFGFLRNQSFHLRSASSGALLERIYFYGKVERLVNAFDKVKDYQVNLWLVKEPSMHYVRYQRKSILASKGTSHFMNKWKCYLITFWQWHFALWFHPRRISRNQLANYFLEFVGYLSNIRTNPTVVRSQSLQNXFLINNAIKKFETLVPIIPLISSLAKAKFCNVLGHPTSKPVWADLSDSNIIYRFVHICRNLSHYYSGSSKKKSLYRIKYILRLSCARTLARKHKSTVRVFLKTLGSGLLEEFLISEEDVLCWTFPKTSSALRGVYKSRIWYLDIICINDLANLK.

This sequence belongs to the intron maturase 2 family. MatK subfamily.

The protein resides in the plastid. Its subcellular location is the chloroplast. Functionally, usually encoded in the trnK tRNA gene intron. Probably assists in splicing its own and other chloroplast group II introns. The protein is Maturase K of Veronica arvensis (Wall speedwell).